The chain runs to 122 residues: Large ribosomal subunit protein uL14 (122 aa).

The protein belongs to the universal ribosomal protein uL14 family. Part of the 50S ribosomal subunit. Forms a cluster with proteins L3 and L19. In the 70S ribosome, L14 and L19 interact and together make contacts with the 16S rRNA in bridges B5 and B8.

In terms of biological role, binds to 23S rRNA. Forms part of two intersubunit bridges in the 70S ribosome. This chain is Large ribosomal subunit protein uL14, found in Francisella tularensis subsp. holarctica (strain LVS).